Consider the following 417-residue polypeptide: D-glycerate 2-kinase (417 aa).

The protein belongs to the glycerate kinase type-1 family. Homodimer. The cofactor is Mg(2+).

It catalyses the reaction (R)-glycerate + ATP = (2R)-2-phosphoglycerate + ADP + H(+). Involved in the degradation of serine via 3-hydroxypyruvate. Catalyzes the ATP-dependent phosphorylation of D-glycerate to 2-phosphoglycerate. The sequence is that of D-glycerate 2-kinase from Thermotoga maritima (strain ATCC 43589 / DSM 3109 / JCM 10099 / NBRC 100826 / MSB8).